A 60-amino-acid polypeptide reads, in one-letter code: UPF0434 protein Daci_3569 (60 aa).

This sequence belongs to the UPF0434 family.

The polypeptide is UPF0434 protein Daci_3569 (Delftia acidovorans (strain DSM 14801 / SPH-1)).